The following is a 284-amino-acid chain: UTP--glucose-1-phosphate uridylyltransferase (284 aa).

This sequence belongs to the UDPGP type 2 family.

The catalysed reaction is alpha-D-glucose 1-phosphate + UTP + H(+) = UDP-alpha-D-glucose + diphosphate. The protein is UTP--glucose-1-phosphate uridylyltransferase (celA) of Komagataeibacter xylinus (Gluconacetobacter xylinus).